A 307-amino-acid polypeptide reads, in one-letter code: Agmatinase (307 aa).

Mn(2+)-binding residues include His-126, Asp-149, His-151, Asp-153, Asp-230, and Asp-232.

The protein belongs to the arginase family. Agmatinase subfamily. The cofactor is Mn(2+).

It carries out the reaction agmatine + H2O = urea + putrescine. Its pathway is amine and polyamine biosynthesis; putrescine biosynthesis via agmatine pathway; putrescine from agmatine: step 1/1. Catalyzes the formation of putrescine from agmatine. The polypeptide is Agmatinase (Sodalis glossinidius (strain morsitans)).